Consider the following 376-residue polypeptide: Chaperone protein DnaJ (376 aa).

In terms of domain architecture, J spans 5–70; that stretch reads DYYEVLGVGR…DKKAAYDQFG (66 aa). Residues 132-210 form a CR-type zinc finger; it reads GLTKELRIPT…CHGEGRVEKS (79 aa). Cys145, Cys148, Cys162, Cys165, Cys184, Cys187, Cys198, and Cys201 together coordinate Zn(2+). CXXCXGXG motif repeat units follow at residues 145-152, 162-169, 184-191, and 198-205; these read CDLCDGSG, CGTCHGQG, CPTCHGRG, and CGKCHGEG.

Belongs to the DnaJ family. As to quaternary structure, homodimer. The cofactor is Zn(2+).

The protein localises to the cytoplasm. Its function is as follows. Participates actively in the response to hyperosmotic and heat shock by preventing the aggregation of stress-denatured proteins and by disaggregating proteins, also in an autonomous, DnaK-independent fashion. Unfolded proteins bind initially to DnaJ; upon interaction with the DnaJ-bound protein, DnaK hydrolyzes its bound ATP, resulting in the formation of a stable complex. GrpE releases ADP from DnaK; ATP binding to DnaK triggers the release of the substrate protein, thus completing the reaction cycle. Several rounds of ATP-dependent interactions between DnaJ, DnaK and GrpE are required for fully efficient folding. Also involved, together with DnaK and GrpE, in the DNA replication of plasmids through activation of initiation proteins. In Shewanella frigidimarina (strain NCIMB 400), this protein is Chaperone protein DnaJ.